The chain runs to 240 residues: Glutamine transport ATP-binding protein GlnQ (240 aa).

Residues 2–236 (IEFKNVSKHF…PPSQRLQEFL (235 aa)) form the ABC transporter domain. 34-41 (GPSGSGKS) provides a ligand contact to ATP.

The protein belongs to the ABC transporter superfamily. As to quaternary structure, heterotetramer with 2 subunits of GlnQ and 2 subunits of GlnP.

The protein localises to the cell inner membrane. Part of the binding-protein-dependent transport system for glutamine. Probably responsible for energy coupling to the transport system. This is Glutamine transport ATP-binding protein GlnQ (glnQ) from Escherichia coli (strain K12).